A 141-amino-acid chain; its full sequence is MINYYYETKFHLYNEFYFSKWIFFVVSKENKFIKELNFIFCDDQYLININNKYLNKNYYTDVITFDNSEDKNLDGDIFISIKRIKYNSLKFKKLFYDELKRVIIHAVLHLIGYKDKKETEKYIMSKKEDIYLFFLKKKYVC.

H105, H109, and D115 together coordinate Zn(2+).

It belongs to the endoribonuclease YbeY family. It depends on Zn(2+) as a cofactor.

Its subcellular location is the cytoplasm. In terms of biological role, single strand-specific metallo-endoribonuclease involved in late-stage 70S ribosome quality control and in maturation of the 3' terminus of the 16S rRNA. The chain is Endoribonuclease YbeY from Karelsulcia muelleri (strain GWSS) (Sulcia muelleri).